The following is a 356-amino-acid chain: Metacaspase-1 (356 aa).

The interval 1–47 (MYSGRSGAPPPAHSPYPNSYNHGPPGHSAGHNVPPPPPTQPVQFGHG) is disordered. Residues H147 and C203 contribute to the active site.

Belongs to the peptidase C14B family.

Its function is as follows. Involved in cell death (apoptosis). This chain is Metacaspase-1 (MCA1), found in Ajellomyces capsulatus (strain NAm1 / WU24) (Darling's disease fungus).